The chain runs to 492 residues: Dipeptide permease D (492 aa).

Transmembrane regions (helical) follow at residues 14–34 (VVAL…LLIL), 49–69 (ALFS…GYLA), 91–111 (LVLG…AIIV), 138–158 (GGFS…PIAC), 167–187 (WAMG…IFLC), 212–232 (NWGW…VLFW), 236–256 (SVYA…RIYL), 269–289 (LIVV…QGGS), 312–332 (MFQS…AWLV), 344–364 (IWGK…ILTL), 379–399 (LMVL…PVAM), 413–433 (VLTG…AGVI), and 458–478 (VFSQ…VIWL).

It belongs to the major facilitator superfamily. Proton-dependent oligopeptide transporter (POT/PTR) (TC 2.A.17) family. DtpD subfamily.

It localises to the cell inner membrane. Its function is as follows. Probable proton-dependent permease that transports dipeptides. The protein is Dipeptide permease D of Klebsiella pneumoniae subsp. pneumoniae (strain ATCC 700721 / MGH 78578).